The chain runs to 165 residues: Photosystem I assembly protein Ycf3 (165 aa).

3 TPR repeats span residues 32-65 (AFTY…EIDP), 69-102 (SYIL…NPFL), and 117-150 (GEQA…TPGN).

It belongs to the Ycf3 family.

The protein resides in the plastid. It is found in the chloroplast thylakoid membrane. Its function is as follows. Essential for the assembly of the photosystem I (PSI) complex. May act as a chaperone-like factor to guide the assembly of the PSI subunits. This Spinacia oleracea (Spinach) protein is Photosystem I assembly protein Ycf3.